The primary structure comprises 394 residues: Actin-related protein 2 (394 aa).

Methionine 1 bears the N-acetylmethionine mark. Residues 160 to 162 (GDG) and 214 to 218 (RMIKE) contribute to the ATP site. Lysine 299 is subject to N6-acetyllysine. 305–310 (GGSTMY) provides a ligand contact to ATP. Lysine 322 carries the N6-acetyllysine modification.

The protein belongs to the actin family. ARP2 subfamily. As to quaternary structure, component of the Arp2/3 complex composed of ACTR2/ARP2, ACTR3/ARP3, ARPC1B/p41-ARC, ARPC2/p34-ARC, ARPC3/p21-ARC, ARPC4/p20-ARC and ARPC5/p16-ARC. Interacts with AVIL.

The protein resides in the cytoplasm. The protein localises to the cytoskeleton. It localises to the cell projection. Its subcellular location is the nucleus. In terms of biological role, ATP-binding component of the Arp2/3 complex, a multiprotein complex that mediates actin polymerization upon stimulation by nucleation-promoting factor (NPF). The Arp2/3 complex mediates the formation of branched actin networks in the cytoplasm, providing the force for cell motility. Seems to contact the pointed end of the daughter actin filament. In podocytes, required for the formation of lamellipodia downstream of AVIL and PLCE1 regulation. In addition to its role in the cytoplasmic cytoskeleton, the Arp2/3 complex also promotes actin polymerization in the nucleus, thereby regulating gene transcription and repair of damaged DNA. The Arp2/3 complex promotes homologous recombination (HR) repair in response to DNA damage by promoting nuclear actin polymerization, leading to drive motility of double-strand breaks (DSBs). This Pongo abelii (Sumatran orangutan) protein is Actin-related protein 2 (ACTR2).